The following is a 638-amino-acid chain: DNA-directed RNA polymerase I subunit RPA1 (638 aa).

Positions 297-317 are enriched in acidic residues; it reads EYDEEDDESSGESEVREGDEE. Residues 297 to 321 are disordered; sequence EYDEEDDESSGESEVREGDEEQEKK.

Belongs to the RNA polymerase beta' chain family. In terms of assembly, each class of RNA polymerase is assembled from 9 to 14 different polypeptides. This subunit is the largest component of RNA polymerase I.

Its subcellular location is the nucleus. The enzyme catalyses RNA(n) + a ribonucleoside 5'-triphosphate = RNA(n+1) + diphosphate. Its function is as follows. DNA-dependent RNA polymerase catalyzes the transcription of DNA into RNA using the four ribonucleoside triphosphates as substrates. RNA polymerase I is essentially used to transcribe ribosomal DNA units. The chain is DNA-directed RNA polymerase I subunit RPA1 (RPA1) from Euplotoides octocarinatus (Freshwater ciliate).